We begin with the raw amino-acid sequence, 258 residues long: Deoxyribose-phosphate aldolase (258 aa).

Asp102 functions as the Proton donor/acceptor in the catalytic mechanism. Residue Lys165 is the Schiff-base intermediate with acetaldehyde of the active site. The active-site Proton donor/acceptor is Lys199.

The protein belongs to the DeoC/FbaB aldolase family. DeoC type 2 subfamily.

It is found in the cytoplasm. The catalysed reaction is 2-deoxy-D-ribose 5-phosphate = D-glyceraldehyde 3-phosphate + acetaldehyde. It functions in the pathway carbohydrate degradation; 2-deoxy-D-ribose 1-phosphate degradation; D-glyceraldehyde 3-phosphate and acetaldehyde from 2-deoxy-alpha-D-ribose 1-phosphate: step 2/2. Functionally, catalyzes a reversible aldol reaction between acetaldehyde and D-glyceraldehyde 3-phosphate to generate 2-deoxy-D-ribose 5-phosphate. The polypeptide is Deoxyribose-phosphate aldolase (Aliivibrio salmonicida (strain LFI1238) (Vibrio salmonicida (strain LFI1238))).